The chain runs to 557 residues: ADP-ribosylation factor-binding protein GGA1 (557 aa).

Residues 29–165 form the VHS domain; sequence ACRSTLPEPD…LLKYKGYTFP (137 aa). The GAT domain occupies 192–317; that stretch reads ERAQAAKLEE…LLKRYKSIKG (126 aa). T348 bears the Phosphothreonine mark. S353, S357, S378, and S394 each carry phosphoserine. Residues 440–556 form the GAE domain; it reads AQSQRHILNQ…EESGTTSLPT (117 aa).

As to quaternary structure, binds to ARF1 and ARF2.

The protein localises to the golgi apparatus. The protein resides in the trans-Golgi network. In terms of biological role, may play a role in the regulation of membrane traffic through the trans-Golgi network. This is ADP-ribosylation factor-binding protein GGA1 (GGA1) from Saccharomyces cerevisiae (strain ATCC 204508 / S288c) (Baker's yeast).